The following is a 276-amino-acid chain: MDSAREPTQGSLDAAGFWQVWQRFDVEEKGYIEEKELDAFFYHMLTKLGVDDAVKEENVQKMKQQFMAPHDVSKDGCIQMKELAGMFLSEDENFLLLFRQETPLDSSVEFMRIWRKYDADSSGFISAAELCNFLRDLFLHHKKAISEAKLEEYTGTMMKIFDKNKDGRLDLNDLARILALQENFLLQFKMDACSSEERKRDFEKIFAHYDVSKTGALEGPEVDGFVKDMMELVQPSIRGVDLDKFREILLRHCDVNKDGKIQKSELALCLGLKINP.

EF-hand domains follow at residues 12–47, 71–93, 105–140, 149–184, 197–232, and 240–276; these read LDAAGFWQVWQRFDVEEKGYIEEKELDAFFYHMLTK, DVSKDGCIQMKELAGMFLSEDEN, DSSVEFMRIWRKYDADSSGFISAAELCNFLRDLFLH, KLEEYTGTMMKIFDKNKDGRLDLNDLARILALQENF, ERKRDFEKIFAHYDVSKTGALEGPEVDGFVKDMMEL, and VDLDKFREILLRHCDVNKDGKIQKSELALCLGLKINP. Positions 71, 73, 75, 77, 82, 118, 120, 122, 129, 162, 164, 166, 168, 173, 210, 212, 214, 221, 254, 256, 258, 260, and 265 each coordinate Ca(2+).

Its subcellular location is the cytoplasm. It localises to the secreted. The protein localises to the cytoplasmic vesicle. It is found in the secretory vesicle membrane. The sequence is that of Secretagogin (SCGN) from Bos taurus (Bovine).